Reading from the N-terminus, the 98-residue chain is NADH-ubiquinone oxidoreductase chain 4L (98 aa).

The next 3 helical transmembrane spans lie at 1–21, 26–46, and 59–79; these read MTTIYLNLILAFTLALSGVLI, LLSTLLCLEGMMLSLFILMAL, and APLILLVFSACEAGVGLALLV.

It belongs to the complex I subunit 4L family. In terms of assembly, core subunit of respiratory chain NADH dehydrogenase (Complex I) which is composed of 45 different subunits.

Its subcellular location is the mitochondrion inner membrane. The enzyme catalyses a ubiquinone + NADH + 5 H(+)(in) = a ubiquinol + NAD(+) + 4 H(+)(out). Its function is as follows. Core subunit of the mitochondrial membrane respiratory chain NADH dehydrogenase (Complex I) which catalyzes electron transfer from NADH through the respiratory chain, using ubiquinone as an electron acceptor. Part of the enzyme membrane arm which is embedded in the lipid bilayer and involved in proton translocation. This Rhyncholestes raphanurus (Chilean shrew opossum) protein is NADH-ubiquinone oxidoreductase chain 4L (MT-ND4L).